The sequence spans 505 residues: Maturase K (505 aa).

This sequence belongs to the intron maturase 2 family. MatK subfamily.

The protein resides in the plastid. Its subcellular location is the chloroplast. Its function is as follows. Usually encoded in the trnK tRNA gene intron. Probably assists in splicing its own and other chloroplast group II introns. The chain is Maturase K from Physcomitrium patens (Spreading-leaved earth moss).